The chain runs to 380 residues: Putative 8-amino-7-oxononanoate synthase (380 aa).

Arg22 serves as a coordination point for substrate. 109–110 (GY) serves as a coordination point for pyridoxal 5'-phosphate. Position 134 (His134) interacts with substrate. Residues Ser182, 207-210 (DEAH), and 238-241 (TLSK) each bind pyridoxal 5'-phosphate. Lys241 carries the post-translational modification N6-(pyridoxal phosphate)lysine. Thr353 contributes to the substrate binding site.

It belongs to the class-II pyridoxal-phosphate-dependent aminotransferase family. BioF subfamily. Homodimer. Requires pyridoxal 5'-phosphate as cofactor.

The enzyme catalyses 6-carboxyhexanoyl-[ACP] + L-alanine + H(+) = (8S)-8-amino-7-oxononanoate + holo-[ACP] + CO2. It participates in cofactor biosynthesis; biotin biosynthesis. Catalyzes the decarboxylative condensation of pimeloyl-[acyl-carrier protein] and L-alanine to produce 8-amino-7-oxononanoate (AON), [acyl-carrier protein], and carbon dioxide. In Gloeothece citriformis (strain PCC 7424) (Cyanothece sp. (strain PCC 7424)), this protein is Putative 8-amino-7-oxononanoate synthase (bioF).